Consider the following 344-residue polypeptide: Methionine import ATP-binding protein MetN 1 (344 aa).

An ABC transporter domain is found at 2-241 (IELRNLSQRF…PHHEVTRALI (240 aa)). 38–45 (GRSGAGKS) is a binding site for ATP.

Belongs to the ABC transporter superfamily. Methionine importer (TC 3.A.1.24) family. As to quaternary structure, the complex is composed of two ATP-binding proteins (MetN), two transmembrane proteins (MetI) and a solute-binding protein (MetQ).

The protein resides in the cell inner membrane. The enzyme catalyses L-methionine(out) + ATP + H2O = L-methionine(in) + ADP + phosphate + H(+). The catalysed reaction is D-methionine(out) + ATP + H2O = D-methionine(in) + ADP + phosphate + H(+). Functionally, part of the ABC transporter complex MetNIQ involved in methionine import. Responsible for energy coupling to the transport system. This Burkholderia ambifaria (strain ATCC BAA-244 / DSM 16087 / CCUG 44356 / LMG 19182 / AMMD) (Burkholderia cepacia (strain AMMD)) protein is Methionine import ATP-binding protein MetN 1.